A 355-amino-acid polypeptide reads, in one-letter code: C-C chemokine receptor type 3 (355 aa).

The Extracellular segment spans residues 1–34; sequence MTTSLDTVETFGPTSYDDDMGLLCEKADVGALIA. A helical transmembrane segment spans residues 35-62; sequence QFVPPLYSLVFMVGLLGNVVVVMILIKY. Over 63-72 the chain is Cytoplasmic; that stretch reads RRLRIMTNIY. The helical transmembrane segment at 73 to 93 threads the bilayer; it reads LLNLAISDLLFLFTLPFWIHY. Residues 94–107 lie on the Extracellular side of the membrane; sequence VRERNWVFSHGMCK. A disulfide bridge links Cys-106 with Cys-183. Residues 108–129 traverse the membrane as a helical segment; the sequence is VLSGFYHTGLYSEIFFIILLTI. Topologically, residues 130-146 are cytoplasmic; the sequence is DRYLAIVHAVFALRART. Residues 147–171 traverse the membrane as a helical segment; that stretch reads VTFGVITSIVTWGLAVLAALPEFIF. At 172-203 the chain is on the extracellular side; the sequence is YGTEKLFPKTLCSAIYPQDTVYSWRHFHTLKM. The chain crosses the membrane as a helical span at residues 204-223; sequence TILCLALPLLVMAICYTGII. Over 224 to 239 the chain is Cytoplasmic; it reads KTLLRCPSKKKYKAIR. A helical transmembrane segment spans residues 240 to 264; the sequence is LIFVIMAVFFIFWTPYNVAILISTY. Topologically, residues 265–281 are extracellular; sequence QSVLFGLDCERSKHLDL. Residues 282 to 305 traverse the membrane as a helical segment; it reads FVLATEVIAYSHCCVNPVIYAFVG. Residues 306–355 are Cytoplasmic-facing; the sequence is ERFRKYLRHFFHRHVLMHLGKYIPFLPSEKLERTSSVSPSTAEPELSIVF.

It belongs to the G-protein coupled receptor 1 family.

It is found in the cell membrane. Receptor for C-C type chemokine. Binds and responds to a variety of chemokines, including CCL11, CCL26, CCL7, CCL13, RANTES(CCL5) and CCL15. Subsequently transduces a signal by increasing the intracellular calcium ions level. In addition acts as a possible functional receptor for NARS1. This chain is C-C chemokine receptor type 3 (CCR3), found in Macaca mulatta (Rhesus macaque).